Reading from the N-terminus, the 129-residue chain is Small ribosomal subunit protein bS6 (129 aa).

A compositionally biased stretch (basic and acidic residues) spans 110–121; sequence FVRRDDERREDT. Residues 110–129 are disordered; sequence FVRRDDERREDTVEAASSEE.

Belongs to the bacterial ribosomal protein bS6 family.

Functionally, binds together with bS18 to 16S ribosomal RNA. This chain is Small ribosomal subunit protein bS6, found in Aeromonas salmonicida (strain A449).